The sequence spans 543 residues: Carboxypeptidase Y homolog A (543 aa).

An N-terminal signal peptide occupies residues 1–17; sequence MKVATSALLVGAVSASV. Residues 18–128 constitute a propeptide that is removed on maturation; the sequence is GPQQQVLKFP…KLENYSMRTK (111 aa). N-linked (GlcNAc...) asparagine glycans are attached at residues Asn-122 and Asn-213. Cystine bridges form between Cys-182–Cys-421, Cys-316–Cys-330, Cys-340–Cys-363, Cys-347–Cys-356, and Cys-385–Cys-391. The active site involves Ser-269. Asp-460 is a catalytic residue. The N-linked (GlcNAc...) asparagine glycan is linked to Asn-508. The active site involves His-519.

It belongs to the peptidase S10 family.

It localises to the vacuole. It carries out the reaction Release of a C-terminal amino acid with broad specificity.. In terms of biological role, vacuolar carboxypeptidase involved in degradation of small peptides. Digests preferentially peptides containing an aliphatic or hydrophobic residue in P1' position, as well as methionine, leucine or phenylalanine in P1 position of ester substrate. The sequence is that of Carboxypeptidase Y homolog A (CPYA) from Leptosphaeria maculans (strain JN3 / isolate v23.1.3 / race Av1-4-5-6-7-8) (Blackleg fungus).